We begin with the raw amino-acid sequence, 113 residues long: DNA-directed RNA polymerase subunit omega (113 aa).

The protein belongs to the RNA polymerase subunit omega family. The RNAP catalytic core consists of 2 alpha, 1 beta, 1 beta' and 1 omega subunit. When a sigma factor is associated with the core the holoenzyme is formed, which can initiate transcription.

It carries out the reaction RNA(n) + a ribonucleoside 5'-triphosphate = RNA(n+1) + diphosphate. Functionally, promotes RNA polymerase assembly. Latches the N- and C-terminal regions of the beta' subunit thereby facilitating its interaction with the beta and alpha subunits. The polypeptide is DNA-directed RNA polymerase subunit omega (Rhizorhabdus wittichii (strain DSM 6014 / CCUG 31198 / JCM 15750 / NBRC 105917 / EY 4224 / RW1) (Sphingomonas wittichii)).